The sequence spans 187 residues: Elongation factor P (187 aa).

The protein belongs to the elongation factor P family.

Its subcellular location is the cytoplasm. Its pathway is protein biosynthesis; polypeptide chain elongation. In terms of biological role, involved in peptide bond synthesis. Stimulates efficient translation and peptide-bond synthesis on native or reconstituted 70S ribosomes in vitro. Probably functions indirectly by altering the affinity of the ribosome for aminoacyl-tRNA, thus increasing their reactivity as acceptors for peptidyl transferase. The protein is Elongation factor P of Rhizorhabdus wittichii (strain DSM 6014 / CCUG 31198 / JCM 15750 / NBRC 105917 / EY 4224 / RW1) (Sphingomonas wittichii).